The sequence spans 196 residues: Peptide deformylase (196 aa).

Positions 105 and 147 each coordinate Fe cation. Glu148 is an active-site residue. Residue His151 coordinates Fe cation.

This sequence belongs to the polypeptide deformylase family. The cofactor is Fe(2+).

The enzyme catalyses N-terminal N-formyl-L-methionyl-[peptide] + H2O = N-terminal L-methionyl-[peptide] + formate. Its function is as follows. Removes the formyl group from the N-terminal Met of newly synthesized proteins. Requires at least a dipeptide for an efficient rate of reaction. N-terminal L-methionine is a prerequisite for activity but the enzyme has broad specificity at other positions. The protein is Peptide deformylase of Christiangramia forsetii (strain DSM 17595 / CGMCC 1.15422 / KT0803) (Gramella forsetii).